We begin with the raw amino-acid sequence, 464 residues long: Cysteine--tRNA ligase (464 aa).

Cys27 serves as a coordination point for Zn(2+). The short motif at 29–39 (PTVYDDAHLGH) is the 'HIGH' region element. Zn(2+) is bound by residues Cys203, His234, and Glu238. A 'KMSKS' region motif is present at residues 266–270 (KMSKS). Lys269 provides a ligand contact to ATP.

It belongs to the class-I aminoacyl-tRNA synthetase family. Monomer. Requires Zn(2+) as cofactor.

It is found in the cytoplasm. The enzyme catalyses tRNA(Cys) + L-cysteine + ATP = L-cysteinyl-tRNA(Cys) + AMP + diphosphate. The protein is Cysteine--tRNA ligase of Campylobacter concisus (strain 13826).